Reading from the N-terminus, the 417-residue chain is MSLVLKKSIDDVALKDKKVLIRVDFNVPVKNGEITNDFRIRSALPTIQKVLKEGGSCILMSHLGRPKGARMSDPKPEKGVRGYEEAATLRPVAARLSELLEEKVAKAPDCLNASIYVSKLKRGDVLLLENVRFYTEEGSKKEEEADAMAKVLASYADLYVSDAFGTAHRDSATMTGIPKVLGSGYAGYLMEKEINYFSRVLNNPPRPLVAIVGGAKVSDKIELLDNMLGRINYLVIGGAMAYTFQKAQGRKIGISMCEEDKLDLAKSLLKKAQERGVQVLLPVDHVCNKEFKAVDSPLVTEDVDVPDGYMALDIGPKTIHMYEEVIGRCKSAIWNGPMGVFEMPCISKGTFAVAKAMGTGTQKDGLLSIIGGGDTASAAELSARAKNMSHVSTGGGASLELLEGKTLPGVAILTDKQ.

Positions 23, 24, 25, 26, 39, 61, 62, 64, 65, 132, 168, and 169 each coordinate (2R)-3-phosphoglycerate. Residues glycine 214 and alanine 215 each coordinate ADP. Glycine 214 is a CDP binding site. Residues alanine 215 and lysine 216 each coordinate AMP. Alanine 215 provides a ligand contact to ATP. Residue alanine 215 coordinates Mg(2+). Lysine 216 is a (2R)-3-phosphoglycerate binding site. CDP is bound at residue aspartate 219. Aspartate 219 provides a ligand contact to Mg(2+). ADP is bound by residues lysine 220 and glycine 238. Lysine 220 contacts AMP. Residue lysine 220 coordinates ATP. Glycine 238 lines the CDP pocket. AMP contacts are provided by alanine 239 and alanine 311. ATP is bound by residues alanine 239 and alanine 311. ADP is bound by residues alanine 311 and asparagine 335. Residues glycine 336 and phenylalanine 341 each coordinate CDP. Residues phenylalanine 341, glutamate 342, aspartate 374, and threonine 375 each contribute to the ADP site. Glutamate 342 is an AMP binding site. The ATP site is built by glutamate 342, aspartate 374, and threonine 375. Aspartate 374 serves as a coordination point for Mg(2+).

Belongs to the phosphoglycerate kinase family. As to quaternary structure, monomer. Mg(2+) serves as cofactor.

It is found in the cytoplasm. The enzyme catalyses (2R)-3-phosphoglycerate + ATP = (2R)-3-phospho-glyceroyl phosphate + ADP. Its pathway is carbohydrate degradation; glycolysis; pyruvate from D-glyceraldehyde 3-phosphate: step 2/5. The protein is Phosphoglycerate kinase, cytosolic (PGKB) of Leishmania mexicana.